The following is a 162-amino-acid chain: Caveolin-2 (162 aa).

Residues 1 to 86 (MGLETEKADV…FEISKYVMYK (86 aa)) are Cytoplasmic-facing. Tyr19 carries the post-translational modification Phosphotyrosine; by SRC. Residues Ser20 and Ser23 each carry the phosphoserine modification. A Phosphotyrosine; by SRC modification is found at Tyr27. Ser36 carries the post-translational modification Phosphoserine. The helical intramembrane region spans 87 to 107 (FLTVFLSIPLAFLAGILFATL). Topologically, residues 108 to 162 (SCLHIWIIMPFVKTCLMVLPSVQTIWKSVTDAIIAPLCTSIGRSFSSVSLQLSHD) are cytoplasmic.

This sequence belongs to the caveolin family. Monomer or homodimer. Interacts with CAV1; the interaction forms a stable heterooligomeric complex that is required for targeting to lipid rafts and for caveolae formation. Tyrosine phosphorylated forms do not form heterooligomers with the Tyr-19-phosphorylated form existing as a monomer or dimer, and the Tyr-27-form as a monomer only. Interacts (tyrosine phosphorylated form) with the SH2 domain-containing proteins, RASA1, NCK1 and SRC. Interacts (tyrosine phosphorylated form) with INSR, the interaction (Tyr-27-phosphorylated form) is increased on insulin stimulation. Interacts (Tyr-19 phosphorylated form) with MAPK1 (phosphorylated form); the interaction, promoted by insulin, leads to nuclear location and MAPK1 activation. Interacts with STAT3; the interaction is increased on insulin-induced tyrosine phosphorylation leading to STAT activation. In terms of processing, phosphorylated on serine and tyrosine residues. CAV1 promotes phosphorylation on Ser-23 which then targets the complex to the plasma membrane, lipid rafts and caveolae. Phosphorylation on Ser-36 appears to modulate mitosis in endothelial cells. Phosphorylation on both Tyr-19 and Tyr-27 is required for insulin-induced 'Ser-727' phosphorylation of STAT3 and its activation. Phosphorylation on Tyr-19 is required for insulin-induced phosphorylation of MAPK1 and DNA binding of STAT3. Tyrosine phosphorylation is induced by both EGF and insulin (By. similarity).

The protein localises to the nucleus. It is found in the cytoplasm. Its subcellular location is the golgi apparatus membrane. The protein resides in the cell membrane. It localises to the membrane. The protein localises to the caveola. Its function is as follows. May act as a scaffolding protein within caveolar membranes. Interacts directly with G-protein alpha subunits and can functionally regulate their activity. Acts as an accessory protein in conjunction with CAV1 in targeting to lipid rafts and driving caveolae formation. The Ser-36 phosphorylated form has a role in modulating mitosis in endothelial cells. Positive regulator of cellular mitogenesis of the MAPK signaling pathway. Required for the insulin-stimulated nuclear translocation and activation of MAPK1 and STAT3, and the subsequent regulation of cell cycle progression. The sequence is that of Caveolin-2 (CAV2) from Saimiri boliviensis boliviensis (Bolivian squirrel monkey).